Consider the following 162-residue polypeptide: Probable cytosine deaminase (162 aa).

Residues 8–132 (EKDLAYLREA…PLYINSRDIL (125 aa)) enclose the CMP/dCMP-type deaminase domain. His59 lines the Zn(2+) pocket. Residue Glu61 is the Proton donor of the active site. The Zn(2+) site is built by Cys87 and Cys90. Position 159 (Asp159) interacts with substrate.

The protein belongs to the cytidine and deoxycytidylate deaminase family. Homodimer. It depends on Zn(2+) as a cofactor.

It localises to the cytoplasm. Its subcellular location is the nucleus. The catalysed reaction is cytosine + H2O + H(+) = uracil + NH4(+). The protein operates within pyrimidine metabolism; UMP biosynthesis via salvage pathway; uracil from cytosine: step 1/1. Functionally, catalyzes the hydrolytic deamination of cytosine to uracil or 5-methylcytosine to thymine. Is involved in the pyrimidine salvage pathway, which allows the cell to utilize cytosine for pyrimidine nucleotide synthesis. The sequence is that of Probable cytosine deaminase from Schizosaccharomyces pombe (strain 972 / ATCC 24843) (Fission yeast).